A 419-amino-acid polypeptide reads, in one-letter code: S-adenosylmethionine synthase (419 aa).

Residue H14 participates in ATP binding. A Mg(2+)-binding site is contributed by D16. A K(+)-binding site is contributed by E42. L-methionine is bound by residues E55 and Q98. The tract at residues 98-108 (QSADINQGVDR) is flexible loop. Residues 164–166 (DAK), 242–243 (KF), D251, 257–258 (RK), A274, and K278 each bind ATP. An L-methionine-binding site is contributed by D251. K282 contributes to the L-methionine binding site.

This sequence belongs to the AdoMet synthase family. As to quaternary structure, homotetramer; dimer of dimers. It depends on Mg(2+) as a cofactor. The cofactor is K(+).

The protein resides in the cytoplasm. The catalysed reaction is L-methionine + ATP + H2O = S-adenosyl-L-methionine + phosphate + diphosphate. The protein operates within amino-acid biosynthesis; S-adenosyl-L-methionine biosynthesis; S-adenosyl-L-methionine from L-methionine: step 1/1. Its function is as follows. Catalyzes the formation of S-adenosylmethionine (AdoMet) from methionine and ATP. The overall synthetic reaction is composed of two sequential steps, AdoMet formation and the subsequent tripolyphosphate hydrolysis which occurs prior to release of AdoMet from the enzyme. The protein is S-adenosylmethionine synthase of Cytophaga hutchinsonii (strain ATCC 33406 / DSM 1761 / CIP 103989 / NBRC 15051 / NCIMB 9469 / D465).